The primary structure comprises 206 residues: Protein GrpE (206 aa).

The protein belongs to the GrpE family. Homodimer.

The protein localises to the cytoplasm. Participates actively in the response to hyperosmotic and heat shock by preventing the aggregation of stress-denatured proteins, in association with DnaK and GrpE. It is the nucleotide exchange factor for DnaK and may function as a thermosensor. Unfolded proteins bind initially to DnaJ; upon interaction with the DnaJ-bound protein, DnaK hydrolyzes its bound ATP, resulting in the formation of a stable complex. GrpE releases ADP from DnaK; ATP binding to DnaK triggers the release of the substrate protein, thus completing the reaction cycle. Several rounds of ATP-dependent interactions between DnaJ, DnaK and GrpE are required for fully efficient folding. This is Protein GrpE from Shewanella baltica (strain OS223).